We begin with the raw amino-acid sequence, 1327 residues long: Myb-like protein O (1327 aa).

The span at 131-142 (NNNINTTNNNNK) shows a compositional bias: low complexity. 4 disordered regions span residues 131–153 (NNNI…EESN), 263–390 (EEED…DESS), 504–668 (PPQQ…NHES), and 717–770 (KKKK…DNDD). Acidic residues predominate over residues 263 to 283 (EEEDDEDYIPPEEEEDDDEDN). The segment covering 322–353 (YNNTANNINNNNIGDESDNNNNNNNNINNNSN) has biased composition (low complexity). Over residues 356 to 374 (DDDDDDDDDNNDDDDDDND) the composition is skewed to acidic residues. Residues 511–532 (SSSSINSSNTMSSSSSSSSLSK) are compositionally biased toward low complexity. Positions 533–542 (NKLKKKKKEE) are enriched in basic residues. The span at 543–554 (KRKEEKRKEEKR) shows a compositional bias: basic and acidic residues. Basic residues predominate over residues 555 to 577 (KEKKRKKRQSITISKFKKNKKKT). Residues 585–606 (SESDSSSDDSDDSDFYYSDIEE) show a composition bias toward acidic residues. Residues 607-619 (GGGGNGNGSGSGV) are compositionally biased toward gly residues. The span at 624–633 (SDNEEGDSSS) shows a compositional bias: acidic residues. 2 stretches are compositionally biased toward low complexity: residues 646–668 (HTNN…NHES) and 722–732 (QSSSSSSSSTI). The segment covering 754–770 (NDDEDDNNNNNEDDNDD) has biased composition (acidic residues). In terms of domain architecture, HTH myb-type spans 897-953 (NVKLNQLKFTGGEDLLLLMGVKRFGTFNWRIIQKRYFPNKTDDQLFHRYKNLLSHSS). The segment at residues 925–949 (WRIIQKRYFPNKTDDQLFHRYKNLL) is a DNA-binding region (H-T-H motif). The Myb-like 1 domain occupies 959-1010 (KQYLNGAKFTKEEEEKLDGAIKIHGLKWDIISRDYLHWKEPAMLKKFYEKRE). Composition is skewed to low complexity over residues 1061 to 1118 (NSTN…NENN) and 1144 to 1160 (PIIE…ETSP). 2 disordered regions span residues 1061 to 1122 (NSTN…YEFG) and 1144 to 1168 (PIIE…PCPI). The region spanning 1268–1316 (KWTREEDRIILITVKEKGTVDNEIWKSLSDTKIQDKTPDQIMYRYLQLL) is the Myb-like 2 domain.

It is found in the nucleus. This chain is Myb-like protein O (mybO), found in Dictyostelium discoideum (Social amoeba).